A 235-amino-acid chain; its full sequence is Claudin-16 (235 aa).

At methionine 1–aspartate 3 the chain is on the cytoplasmic side. A helical transmembrane segment spans residues leucine 4–threonine 24. Over tryptophan 25–arginine 79 the chain is Extracellular. The chain crosses the membrane as a helical span at residues alanine 80 to leucine 100. At aspartate 101 to arginine 115 the chain is on the cytoplasmic side. A helical transmembrane segment spans residues isoleucine 116–valine 136. Residues tryptophan 137–glycine 169 are Extracellular-facing. A helical membrane pass occupies residues methionine 170–phenylalanine 190. Over lysine 191–valine 235 the chain is Cytoplasmic. Positions threonine 233 to valine 235 match the Interaction with TJP1 motif.

This sequence belongs to the claudin family. Can form heteropolymeric tight junction strands with other claudins. Interacts with CLDN19. Interacts (via PDZ-binding motif TRV) with TJP1 (via PDZ domain). Cannot form tight junction strands on its own. In terms of tissue distribution, kidney-specific, including the thick ascending limb of Henle (TAL).

The protein localises to the cell junction. It is found in the tight junction. Its subcellular location is the cell membrane. The catalysed reaction is Mg(2+)(in) = Mg(2+)(out). The enzyme catalyses Ca(2+)(in) = Ca(2+)(out). It carries out the reaction Na(+)(in) = Na(+)(out). It catalyses the reaction K(+)(in) = K(+)(out). The catalysed reaction is Rb(+)(in) = Rb(+)(out). The enzyme catalyses Cs(+)(in) = Cs(+)(out). It carries out the reaction Li(+)(in) = Li(+)(out). Its function is as follows. Forms paracellular channels: coassembles with CLDN19 into tight junction strands with cation-selective channels through the strands, conveying epithelial permeability in a process known as paracellular tight junction permeability. Involved in the maintenance of ion gradients along the nephron. In the thick ascending limb (TAL) of Henle's loop, facilitates sodium paracellular permeability from the interstitial compartment to the lumen, contributing to the lumen-positive transepithelial potential that drives paracellular magnesium and calcium reabsorption. In Homo sapiens (Human), this protein is Claudin-16.